A 1141-amino-acid chain; its full sequence is Sterol regulatory element-binding protein 2 (1141 aa).

The interval 1–50 (MDDSGELGGLETMETLTELGDELTLGDIDEMLQFVSNQVGEFPDLFSEQL) is transcriptional activation (acidic). Residues 1–479 (MDDSGELGGL…PPVALGMVDR (479 aa)) are Cytoplasmic-facing. The interval 48-144 (EQLCSSFPGS…PQPQPQPQTQ (97 aa)) is disordered. Residues 63–82 (SSGSSGSSSSSSNGRGSSSG) show a composition bias toward low complexity. Over residues 88-97 (VQRSFTQVTL) the composition is skewed to polar residues. Low complexity predominate over residues 98–110 (PSFSPSAASPQAP). Residues 114–126 (VKVSPTSVPTTPR) show a composition bias toward polar residues. The interval 237-491 (QQVPVLVQPQ…ILLCVLTFLC (255 aa)) is interaction with LMNA. In terms of domain architecture, bHLH spans 330 to 380 (ERRTTHNIIEKRYRSSINDKIIELKDLVMGTDAKMHKSGVLRKAIDYIKYL). The tract at residues 380–401 (LQQVNHKLRQENMVLKLANQKN) is leucine-zipper. A Glycyl lysine isopeptide (Lys-Gly) (interchain with G-Cter in SUMO2) cross-link involves residue Lys464. A helical membrane pass occupies residues 480–500 (SRILLCVLTFLCLSFNPLTSL). Residues 501–533 (LQWGGAHDSDQHPHSGSGRSVLSFESGSGGWFD) lie on the Lumenal side of the membrane. Residues 534–554 (WMMPTLLLWLVNGVIVLSVFV) form a helical membrane-spanning segment. At 555 to 1139 (KLLVHGEPVI…VKLGGGTAIA (585 aa)) the chain is on the cytoplasmic side. 2 positions are modified to phosphoserine: Ser855 and Ser1098.

The protein belongs to the SREBP family. Forms a tight complex with SCAP, the SCAP-SREBP complex, in the endoplasmic reticulum membrane and the Golgi apparatus. Interacts with PAQR3; the interaction anchors the SCAP-SREBP complex to the Golgi apparatus in low cholesterol conditions. Interacts (via C-terminal domain) with RNF139. As to quaternary structure, homodimer; efficient DNA binding of the soluble transcription factor fragment requires dimerization with another bHLH protein. Interacts with LMNA. In terms of processing, processed in the Golgi apparatus, releasing the protein from the membrane. At low cholesterol the SCAP-SREBP complex is recruited into COPII vesicles for export from the endoplasmic reticulum. In the Golgi, complex SREBPs are cleaved sequentially by site-1 (MBTPS1, S1P) and site-2 (MBTPS2, S2P) protease. The first cleavage by site-1 protease occurs within the luminal loop, the second cleavage by site-2 protease occurs within the first transmembrane domain, releasing the transcription factor from the Golgi membrane. Apoptosis triggers cleavage by the cysteine proteases caspase-3 and caspase-7. Cleavage and activation is induced by mediated cholesterol efflux. Phosphorylated by AMPK, leading to suppress protein processing and nuclear translocation, and repress target gene expression. Post-translationally, SCAP-free SREBF2 is ubiquitinated by the BCR(ARMC5) complex, leading to its degradation. In terms of processing, ubiquitinated; the nuclear form has a rapid turnover and is rapidly ubiquitinated and degraded by the proteasome in the nucleus. As to expression, ubiquitously expressed in adult and fetal tissues.

The protein resides in the endoplasmic reticulum membrane. Its subcellular location is the golgi apparatus membrane. The protein localises to the cytoplasmic vesicle. It localises to the COPII-coated vesicle membrane. It is found in the nucleus. Its activity is regulated as follows. Activation by cleavage is down-regulated upon activation of SIRT3-dependent PRKAA1/AMPK-alpha signaling cascade which leads to inhibition of ATP-consuming lipogenesis to restore cellular energy balance. Its function is as follows. Precursor of the transcription factor form (Processed sterol regulatory element-binding protein 2), which is embedded in the endoplasmic reticulum membrane. Low sterol concentrations promote processing of this form, releasing the transcription factor form that translocates into the nucleus and activates transcription of genes involved in cholesterol biosynthesis. Functionally, key transcription factor that regulates expression of genes involved in cholesterol biosynthesis. Binds to the sterol regulatory element 1 (SRE-1) (5'-ATCACCCCAC-3'). Has dual sequence specificity binding to both an E-box motif (5'-ATCACGTGA-3') and to SRE-1 (5'-ATCACCCCAC-3'). Regulates transcription of genes related to cholesterol synthesis pathway. The polypeptide is Sterol regulatory element-binding protein 2 (Homo sapiens (Human)).